A 71-amino-acid chain; its full sequence is Small ribosomal subunit protein bS21 (71 aa).

It belongs to the bacterial ribosomal protein bS21 family.

This Alcanivorax borkumensis (strain ATCC 700651 / DSM 11573 / NCIMB 13689 / SK2) protein is Small ribosomal subunit protein bS21.